The following is a 240-amino-acid chain: MKILLIGYGAMNQRVARLAEEKGHEIVGVIENTPKATTPYQQYQHIADVKDADVAIDFSNPNLLFPLLDEEFHLPLVVATTGEKEKLLNKLDELSQNIPVFFSANMSYGVHALTKILAAAVPLLDDFDIELTEAHHNKKVDAPSGTLEKLYDVIVSLKENVTPVYDRHELNEKRQPQDIGIHSIRGGTIVGEHEVLFAGTDETIQITHRAQSKDIFANGAIQAAERLVNKPNGFYTFDNL.

Residues 79–81 (ATT) and 103–106 (SANM) each bind NAD(+). The active-site Proton donor/acceptor is H135. H136 contacts (S)-2,3,4,5-tetrahydrodipicolinate. The active-site Proton donor is K139. (S)-2,3,4,5-tetrahydrodipicolinate is bound at residue 145–146 (GT).

The protein belongs to the DapB family.

It is found in the cytoplasm. It carries out the reaction (S)-2,3,4,5-tetrahydrodipicolinate + NAD(+) + H2O = (2S,4S)-4-hydroxy-2,3,4,5-tetrahydrodipicolinate + NADH + H(+). It catalyses the reaction (S)-2,3,4,5-tetrahydrodipicolinate + NADP(+) + H2O = (2S,4S)-4-hydroxy-2,3,4,5-tetrahydrodipicolinate + NADPH + H(+). Its pathway is amino-acid biosynthesis; L-lysine biosynthesis via DAP pathway; (S)-tetrahydrodipicolinate from L-aspartate: step 4/4. In terms of biological role, catalyzes the conversion of 4-hydroxy-tetrahydrodipicolinate (HTPA) to tetrahydrodipicolinate. The chain is 4-hydroxy-tetrahydrodipicolinate reductase from Staphylococcus aureus (strain JH1).